The chain runs to 314 residues: Inactive UDP-glycosyltransferase 79A6 (314 aa).

As to expression, expressed in young leaves, flowers, pods and pod shells. Barely detected in seeds, roots and root nodules.

In terms of biological role, has no flavonol 3-O-glucoside (1-&gt;6) rhamnosyltransferase activity in vitro. In Glycine max (Soybean), this protein is Inactive UDP-glycosyltransferase 79A6.